The sequence spans 60 residues: Large ribosomal subunit protein bL33 (60 aa).

This sequence belongs to the bacterial ribosomal protein bL33 family.

In Christiangramia forsetii (strain DSM 17595 / CGMCC 1.15422 / KT0803) (Gramella forsetii), this protein is Large ribosomal subunit protein bL33.